The sequence spans 367 residues: Putative threonine-phosphate decarboxylase (367 aa).

O-phospho-L-threonine-binding positions include 12 to 13 (HG), Asn29, and Asn152. Lys213 is modified (N6-(pyridoxal phosphate)lysine). Residues Arg320 and Arg334 each contribute to the O-phospho-L-threonine site.

This sequence belongs to the class-II pyridoxal-phosphate-dependent aminotransferase family. Pyridoxal 5'-phosphate is required as a cofactor.

The catalysed reaction is O-phospho-L-threonine + H(+) = (R)-1-aminopropan-2-yl phosphate + CO2. The protein operates within cofactor biosynthesis; adenosylcobalamin biosynthesis. Decarboxylates L-threonine-O-3-phosphate to yield (R)-1-amino-2-propanol O-2-phosphate, the precursor for the linkage between the nucleotide loop and the corrin ring in cobalamin. The chain is Putative threonine-phosphate decarboxylase (cobD) from Caldanaerobacter subterraneus subsp. tengcongensis (strain DSM 15242 / JCM 11007 / NBRC 100824 / MB4) (Thermoanaerobacter tengcongensis).